A 316-amino-acid polypeptide reads, in one-letter code: Biotin synthase (316 aa).

The Radical SAM core domain occupies 42–268 (LCGESVDLCT…INPTAYIRMA (227 aa)). Cys-60, Cys-64, and Cys-67 together coordinate [4Fe-4S] cluster. The [2Fe-2S] cluster site is built by Ser-104, Cys-136, Cys-196, and Arg-266.

It belongs to the radical SAM superfamily. Biotin synthase family. Homodimer. Requires [4Fe-4S] cluster as cofactor. [2Fe-2S] cluster is required as a cofactor.

The catalysed reaction is (4R,5S)-dethiobiotin + (sulfur carrier)-SH + 2 reduced [2Fe-2S]-[ferredoxin] + 2 S-adenosyl-L-methionine = (sulfur carrier)-H + biotin + 2 5'-deoxyadenosine + 2 L-methionine + 2 oxidized [2Fe-2S]-[ferredoxin]. It functions in the pathway cofactor biosynthesis; biotin biosynthesis; biotin from 7,8-diaminononanoate: step 2/2. Its function is as follows. Catalyzes the conversion of dethiobiotin (DTB) to biotin by the insertion of a sulfur atom into dethiobiotin via a radical-based mechanism. This is Biotin synthase from Clostridium beijerinckii (strain ATCC 51743 / NCIMB 8052) (Clostridium acetobutylicum).